Reading from the N-terminus, the 226-residue chain is ATP-dependent dethiobiotin synthetase BioD (226 aa).

Residue T19 participates in Mg(2+) binding. K40 is an active-site residue. D53 and E114 together coordinate Mg(2+). ATP is bound by residues D53, 114–117 (EGAG), and 174–175 (NR).

It belongs to the dethiobiotin synthetase family. In terms of assembly, homodimer. The cofactor is Mg(2+).

It localises to the cytoplasm. It carries out the reaction (7R,8S)-7,8-diammoniononanoate + CO2 + ATP = (4R,5S)-dethiobiotin + ADP + phosphate + 3 H(+). It functions in the pathway cofactor biosynthesis; biotin biosynthesis; biotin from 7,8-diaminononanoate: step 1/2. In terms of biological role, catalyzes a mechanistically unusual reaction, the ATP-dependent insertion of CO2 between the N7 and N8 nitrogen atoms of 7,8-diaminopelargonic acid (DAPA, also called 7,8-diammoniononanoate) to form a ureido ring. This Nitrosospira multiformis (strain ATCC 25196 / NCIMB 11849 / C 71) protein is ATP-dependent dethiobiotin synthetase BioD.